The primary structure comprises 384 residues: Dual-specificity RNA methyltransferase RlmN (384 aa).

E105 acts as the Proton acceptor in catalysis. Positions E111 to D350 constitute a Radical SAM core domain. C118 and C355 are disulfide-bonded. 3 residues coordinate [4Fe-4S] cluster: C125, C129, and C132. Residues G179 to E180, S211, S233 to H235, and N312 contribute to the S-adenosyl-L-methionine site. The active-site S-methylcysteine intermediate is the C355.

Belongs to the radical SAM superfamily. RlmN family. The cofactor is [4Fe-4S] cluster.

It is found in the cytoplasm. It catalyses the reaction adenosine(2503) in 23S rRNA + 2 reduced [2Fe-2S]-[ferredoxin] + 2 S-adenosyl-L-methionine = 2-methyladenosine(2503) in 23S rRNA + 5'-deoxyadenosine + L-methionine + 2 oxidized [2Fe-2S]-[ferredoxin] + S-adenosyl-L-homocysteine. It carries out the reaction adenosine(37) in tRNA + 2 reduced [2Fe-2S]-[ferredoxin] + 2 S-adenosyl-L-methionine = 2-methyladenosine(37) in tRNA + 5'-deoxyadenosine + L-methionine + 2 oxidized [2Fe-2S]-[ferredoxin] + S-adenosyl-L-homocysteine. In terms of biological role, specifically methylates position 2 of adenine 2503 in 23S rRNA and position 2 of adenine 37 in tRNAs. m2A2503 modification seems to play a crucial role in the proofreading step occurring at the peptidyl transferase center and thus would serve to optimize ribosomal fidelity. This chain is Dual-specificity RNA methyltransferase RlmN, found in Shigella boydii serotype 18 (strain CDC 3083-94 / BS512).